We begin with the raw amino-acid sequence, 217 residues long: 4-hydroxy-tetrahydrodipicolinate reductase (217 aa).

NAD(+) is bound by residues 7-12 (GFKGKM), 71-73 (GTT), and 95-98 (SYNF). His-127 (proton donor/acceptor) is an active-site residue. His-128 contacts (S)-2,3,4,5-tetrahydrodipicolinate. Catalysis depends on Lys-131, which acts as the Proton donor. (S)-2,3,4,5-tetrahydrodipicolinate is bound at residue 137–138 (GT).

It belongs to the DapB family.

It localises to the cytoplasm. It carries out the reaction (S)-2,3,4,5-tetrahydrodipicolinate + NAD(+) + H2O = (2S,4S)-4-hydroxy-2,3,4,5-tetrahydrodipicolinate + NADH + H(+). It catalyses the reaction (S)-2,3,4,5-tetrahydrodipicolinate + NADP(+) + H2O = (2S,4S)-4-hydroxy-2,3,4,5-tetrahydrodipicolinate + NADPH + H(+). It functions in the pathway amino-acid biosynthesis; L-lysine biosynthesis via DAP pathway; (S)-tetrahydrodipicolinate from L-aspartate: step 4/4. Its function is as follows. Catalyzes the conversion of 4-hydroxy-tetrahydrodipicolinate (HTPA) to tetrahydrodipicolinate. The sequence is that of 4-hydroxy-tetrahydrodipicolinate reductase from Thermosipho africanus (strain TCF52B).